The sequence spans 178 residues: Large ribosomal subunit protein uL6 (178 aa).

Belongs to the universal ribosomal protein uL6 family. As to quaternary structure, part of the 50S ribosomal subunit.

In terms of biological role, this protein binds to the 23S rRNA, and is important in its secondary structure. It is located near the subunit interface in the base of the L7/L12 stalk, and near the tRNA binding site of the peptidyltransferase center. In Helicobacter acinonychis (strain Sheeba), this protein is Large ribosomal subunit protein uL6.